Consider the following 367-residue polypeptide: Probable butyrate kinase (367 aa).

Belongs to the acetokinase family.

It is found in the cytoplasm. It catalyses the reaction butanoate + ATP = butanoyl phosphate + ADP. This Exiguobacterium sibiricum (strain DSM 17290 / CCUG 55495 / CIP 109462 / JCM 13490 / 255-15) protein is Probable butyrate kinase.